Consider the following 62-residue polypeptide: Protein YmcF (62 aa).

This sequence belongs to the YmcF/YnqF peptide family.

This chain is Protein YmcF, found in Escherichia coli (strain K12).